The following is a 411-amino-acid chain: Putative ion-transport protein YfeO (411 aa).

11 helical membrane passes run 9 to 29, 54 to 74, 99 to 119, 149 to 169, 186 to 206, 223 to 243, 258 to 278, 296 to 316, 322 to 342, 343 to 363, and 386 to 406; these read MLLLSLPALIIGVASSLVLIA, DSPFWIVGMLTLTGIVVGLII, ALPGLLLALIIGLAGGVSLGP, ILASAGTIGALFGTPVAAALI, LFAPLMAAAAGSLTTSLFFHP, IASGAIVAAIAIAAGMVAVWC, VLILGIGGFILGILGVIGGPL, LGAGDYFTLAAVKLAALVIAA, GGRIFPAVFIGAALGLMLHAH, VEAVPAAITVSCAILGLVLVV, and LLCIVMLPAWLLLAGKPLLAA.

Belongs to the chloride channel (TC 2.A.49) family.

It is found in the cell membrane. This Salmonella schwarzengrund (strain CVM19633) protein is Putative ion-transport protein YfeO.